Consider the following 275-residue polypeptide: Orotidine 5'-phosphate decarboxylase (275 aa).

Residue Lys95 is the Proton donor of the active site.

Belongs to the OMP decarboxylase family. Type 2 subfamily.

The catalysed reaction is orotidine 5'-phosphate + H(+) = UMP + CO2. It participates in pyrimidine metabolism; UMP biosynthesis via de novo pathway; UMP from orotate: step 2/2. This is Orotidine 5'-phosphate decarboxylase from Delftia acidovorans (strain DSM 14801 / SPH-1).